The chain runs to 347 residues: NADH-ubiquinone oxidoreductase chain 2 (347 aa).

Helical transmembrane passes span 1–21 (MNPI…MIVM), 25–45 (HWLM…PILM), 60–80 (FLTQ…NLMF), 89–109 (IFNP…LGLS), 111–131 (FHFW…LILL), 149–169 (INLD…GWGG), 178–198 (IMAY…TYNP), 201–221 (TALN…LFML), 242–262 (SLIL…GFIP), 274–294 (DSII…YFYM), and 323–343 (MNFL…TPIM).

It belongs to the complex I subunit 2 family. Core subunit of respiratory chain NADH dehydrogenase (Complex I) which is composed of 45 different subunits. Interacts with TMEM242.

The protein localises to the mitochondrion inner membrane. The enzyme catalyses a ubiquinone + NADH + 5 H(+)(in) = a ubiquinol + NAD(+) + 4 H(+)(out). Its function is as follows. Core subunit of the mitochondrial membrane respiratory chain NADH dehydrogenase (Complex I) which catalyzes electron transfer from NADH through the respiratory chain, using ubiquinone as an electron acceptor. Essential for the catalytic activity and assembly of complex I. The sequence is that of NADH-ubiquinone oxidoreductase chain 2 from Ceratotherium simum (White rhinoceros).